The sequence spans 356 residues: Chaperone protein DnaJ (356 aa).

The J domain maps to 5–69; the sequence is DYYQILGVSK…ERRKEYDRIL (65 aa). The CR-type zinc finger occupies 121–197; the sequence is GCEKDIEYER…CSGRGRVAMH (77 aa). The Zn(2+) site is built by C134, C137, C151, C154, C171, C174, C185, and C188. 4 CXXCXGXG motif repeats span residues 134-141, 151-158, 171-178, and 185-192; these read CPTCEGKG, CHACEGTG, CSVCKGRG, and CPACSGRG.

It belongs to the DnaJ family. In terms of assembly, homodimer. Requires Zn(2+) as cofactor.

The protein localises to the cytoplasm. Participates actively in the response to hyperosmotic and heat shock by preventing the aggregation of stress-denatured proteins and by disaggregating proteins, also in an autonomous, DnaK-independent fashion. Unfolded proteins bind initially to DnaJ; upon interaction with the DnaJ-bound protein, DnaK hydrolyzes its bound ATP, resulting in the formation of a stable complex. GrpE releases ADP from DnaK; ATP binding to DnaK triggers the release of the substrate protein, thus completing the reaction cycle. Several rounds of ATP-dependent interactions between DnaJ, DnaK and GrpE are required for fully efficient folding. Also involved, together with DnaK and GrpE, in the DNA replication of plasmids through activation of initiation proteins. In Hydrogenobacter thermophilus (strain DSM 6534 / IAM 12695 / TK-6), this protein is Chaperone protein DnaJ.